Consider the following 328-residue polypeptide: tRNA U34 carboxymethyltransferase (328 aa).

Carboxy-S-adenosyl-L-methionine-binding positions include Lys91, Trp105, Lys110, Gly130, 181–182 (IE), Met196, Tyr200, and Arg315.

It belongs to the class I-like SAM-binding methyltransferase superfamily. CmoB family. As to quaternary structure, homotetramer.

It catalyses the reaction carboxy-S-adenosyl-L-methionine + 5-hydroxyuridine(34) in tRNA = 5-carboxymethoxyuridine(34) in tRNA + S-adenosyl-L-homocysteine + H(+). Functionally, catalyzes carboxymethyl transfer from carboxy-S-adenosyl-L-methionine (Cx-SAM) to 5-hydroxyuridine (ho5U) to form 5-carboxymethoxyuridine (cmo5U) at position 34 in tRNAs. This is tRNA U34 carboxymethyltransferase from Pectobacterium carotovorum subsp. carotovorum (strain PC1).